The chain runs to 210 residues: Fibroblast growth factor 21 (210 aa).

The signal sequence occupies residues M1–Q28. The segment at P144–S210 is disordered.

This sequence belongs to the heparin-binding growth factors family. In terms of assembly, interacts (via C-terminus) with KLB; this interaction is direct. Interacts with FGFR4. As to expression, most abundantly expressed in the liver, also expressed in the thymus at lower levels. Expressed in skeletal muscle (at protein level). Secreted in plasma (at protein level).

The protein localises to the secreted. In terms of biological role, stimulates glucose uptake in differentiated adipocytes via the induction of glucose transporter SLC2A1/GLUT1 expression (but not SLC2A4/GLUT4 expression). Activity probably requires the presence of KLB. Regulates systemic glucose homeostasis and insulin sensitivity. The protein is Fibroblast growth factor 21 (Fgf21) of Mus musculus (Mouse).